A 713-amino-acid polypeptide reads, in one-letter code: P-loop NTPase domain-containing protein LPA1 homolog (713 aa).

Disordered stretches follow at residues 218-249 (AKKR…PIGK), 504-575 (TSQA…EDLS), and 650-713 (LDSP…APDK). The span at 231–246 (DFDKTRPLNDKPDGKP) shows a compositional bias: basic and acidic residues. Over residues 504–531 (TSQAGSVNESWDNANEGTGSHVPSSSGS) the composition is skewed to polar residues. A compositionally biased stretch (basic and acidic residues) spans 533 to 544 (KKLDGHCKEIKE). Positions 551 to 562 (SDDDEEEEEEAA) are enriched in acidic residues. A compositionally biased stretch (low complexity) spans 656–668 (ARSSSALPISASS).

Its function is as follows. Required for the accumulation of phytic acid in seeds. Phytic acid is the primary storage form of phosphorus in cereal grains and other plant seeds. This is P-loop NTPase domain-containing protein LPA1 homolog from Oryza sativa subsp. japonica (Rice).